We begin with the raw amino-acid sequence, 413 residues long: Na(+)-translocating NADH-quinone reductase subunit B (413 aa).

A run of 3 helical transmembrane segments spans residues 55–75 (IMIM…YNAG), 128–148 (FLPI…LFCM), and 163–183 (ILFA…LGIT). Position 235 is an FMN phosphoryl threonine (T235). 5 helical membrane passes run 267 to 287 (IPGS…AMIV), 296 to 316 (IIAG…VIGS), 324 to 344 (MPWH…FMAT), 357 to 377 (WWYG…NPAY), and 380 to 400 (GMML…HVVI).

Belongs to the NqrB/RnfD family. In terms of assembly, composed of six subunits; NqrA, NqrB, NqrC, NqrD, NqrE and NqrF. FMN serves as cofactor.

The protein resides in the cell inner membrane. The catalysed reaction is a ubiquinone + n Na(+)(in) + NADH + H(+) = a ubiquinol + n Na(+)(out) + NAD(+). Functionally, NQR complex catalyzes the reduction of ubiquinone-1 to ubiquinol by two successive reactions, coupled with the transport of Na(+) ions from the cytoplasm to the periplasm. NqrA to NqrE are probably involved in the second step, the conversion of ubisemiquinone to ubiquinol. This chain is Na(+)-translocating NADH-quinone reductase subunit B, found in Vibrio campbellii (strain ATCC BAA-1116).